The primary structure comprises 596 residues: NADH-quinone oxidoreductase subunit C/D (596 aa).

The segment at 1-186 is NADH dehydrogenase I subunit C; it reads MVDIMCNDST…NPFILTKQKE (186 aa). The NADH dehydrogenase I subunit D stretch occupies residues 210–596; sequence NFMFLNLGPN…IDFVMSDVDR (387 aa).

In the N-terminal section; belongs to the complex I 30 kDa subunit family. This sequence in the C-terminal section; belongs to the complex I 49 kDa subunit family. NDH-1 is composed of 13 different subunits. Subunits NuoB, CD, E, F, and G constitute the peripheral sector of the complex.

Its subcellular location is the cell inner membrane. It catalyses the reaction a quinone + NADH + 5 H(+)(in) = a quinol + NAD(+) + 4 H(+)(out). NDH-1 shuttles electrons from NADH, via FMN and iron-sulfur (Fe-S) centers, to quinones in the respiratory chain. The immediate electron acceptor for the enzyme in this species is believed to be ubiquinone. Couples the redox reaction to proton translocation (for every two electrons transferred, four hydrogen ions are translocated across the cytoplasmic membrane), and thus conserves the redox energy in a proton gradient. This is NADH-quinone oxidoreductase subunit C/D from Blochmanniella pennsylvanica (strain BPEN).